We begin with the raw amino-acid sequence, 1461 residues long: Formin-3 (1461 aa).

2 disordered regions span residues 1–67 and 431–457; these read MASK…SDDN and YREE…RPTT. Positions 12–28 are enriched in low complexity; the sequence is TSRSIQSRNSSYSTSSN. 2 stretches are compositionally biased toward polar residues: residues 29-53 and 438-457; these read ERIG…STND and PHGN…RPTT. A GBD/FH3 domain is found at 92–508; the sequence is SETEQLRKIY…KIQKSMQLLT (417 aa). The tract at residues 137-515 is interaction with tea4; the sequence is QHTVLDEATY…LLTHTLEALE (379 aa). Residues 540–639 adopt a coiled-coil conformation; that stretch reads GTAEEIAEYK…VQNSNEQHLQ (100 aa). The segment at 683–811 is disordered; the sequence is GIPVRVHTPS…EPKIDETSLT (129 aa). A compositionally biased stretch (low complexity) spans 700 to 718; that stretch reads SFSGSEISSSPSPLLPDVS. Pro residues predominate over residues 731–784; the sequence is SPPPPPPAVIVPTPAPAPIPVPPPAPIMGGPPPPPPPPGVAGAGPPPPPPPPPA. The span at 801–811 shows a compositional bias: basic and acidic residues; sequence PEPKIDETSLT. Positions 845–1257 constitute an FH2 domain; it reads LRDLHKPTRP…RIMSEDRDKL (413 aa). Disordered stretches follow at residues 1268 to 1337 and 1416 to 1461; these read AKYR…AEEK and ERLQ…RQKQ. Basic and acidic residues-rich tracts occupy residues 1273 to 1315 and 1325 to 1337; these read KREL…KTGD and MEDL…AEEK. The segment covering 1445-1454 has biased composition (polar residues); that stretch reads TNGSNASNLV.

This sequence belongs to the formin homology family. In terms of assembly, interacts with rax2, rho3 and tea4. Interacts with tea1 in the presence of tea4.

The protein localises to the cytoplasm. The protein resides in the cell cortex. Its subcellular location is the cell tip. In terms of biological role, involved in controlling polarized cell growth. Required for interphase actin cable formation and microtubule organization. The protein is Formin-3 (for3) of Schizosaccharomyces pombe (strain 972 / ATCC 24843) (Fission yeast).